The primary structure comprises 181 residues: NAD(P)H-quinone oxidoreductase subunit I, chloroplastic (181 aa).

4Fe-4S ferredoxin-type domains lie at Gly52–Glu81 and Lys92–Glu121. Positions 61, 64, 67, 71, 101, 104, 107, and 111 each coordinate [4Fe-4S] cluster.

Belongs to the complex I 23 kDa subunit family. In terms of assembly, NDH is composed of at least 16 different subunits, 5 of which are encoded in the nucleus. [4Fe-4S] cluster is required as a cofactor.

It localises to the plastid. Its subcellular location is the chloroplast thylakoid membrane. It carries out the reaction a plastoquinone + NADH + (n+1) H(+)(in) = a plastoquinol + NAD(+) + n H(+)(out). It catalyses the reaction a plastoquinone + NADPH + (n+1) H(+)(in) = a plastoquinol + NADP(+) + n H(+)(out). In terms of biological role, NDH shuttles electrons from NAD(P)H:plastoquinone, via FMN and iron-sulfur (Fe-S) centers, to quinones in the photosynthetic chain and possibly in a chloroplast respiratory chain. The immediate electron acceptor for the enzyme in this species is believed to be plastoquinone. Couples the redox reaction to proton translocation, and thus conserves the redox energy in a proton gradient. This chain is NAD(P)H-quinone oxidoreductase subunit I, chloroplastic, found in Staurastrum punctulatum (Green alga).